Reading from the N-terminus, the 94-residue chain is Integration host factor subunit beta (94 aa).

This sequence belongs to the bacterial histone-like protein family. As to quaternary structure, heterodimer of an alpha and a beta chain.

Its function is as follows. This protein is one of the two subunits of integration host factor, a specific DNA-binding protein that functions in genetic recombination as well as in transcriptional and translational control. The sequence is that of Integration host factor subunit beta from Sodalis glossinidius (strain morsitans).